The chain runs to 749 residues: Disintegrin and metalloproteinase domain-containing protein 10 (749 aa).

The signal sequence occupies residues 1–18 (MGLLRLVFLLSWAASAGG). The propeptide occupies 19 to 213 (LYGNPLNKYI…SGPVILRKKR (195 aa)). Over 19–673 (LYGNPLNKYI…NPELYENIAE (655 aa)) the chain is Extracellular. The Cysteine switch signature appears at 170 to 177 (GGCADSSV). Cys-172 contacts Zn(2+). One can recognise a Peptidase M12B domain in the interval 220-457 (NTCQLFIQTD…KENSCFVESG (238 aa)). 17 disulfide bridges follow: Cys-222-Cys-314, Cys-345-Cys-452, Cys-400-Cys-436, Cys-461-Cys-496, Cys-472-Cys-485, Cys-474-Cys-480, Cys-484-Cys-516, Cys-504-Cys-512, Cys-511-Cys-537, Cys-525-Cys-544, Cys-531-Cys-563, Cys-556-Cys-568, Cys-573-Cys-599, Cys-581-Cys-608, Cys-583-Cys-598, Cys-595-Cys-640, and Cys-633-Cys-646. N-linked (GlcNAc...) asparagine glycosylation is found at Asn-268 and Asn-279. His-384 is a binding site for Zn(2+). Glu-385 is an active-site residue. Zn(2+)-binding residues include His-388 and His-394. The N-linked (GlcNAc...) asparagine glycan is linked to Asn-440. In terms of domain architecture, Disintegrin spans 458–552 (QPICGNGLVE…QCPPSEPREN (95 aa)). Residue Asn-552 is glycosylated (N-linked (GlcNAc...) asparagine). A helical membrane pass occupies residues 674 to 694 (WIVAHWWAVLLMGIALIMLMA). Residues 695–749 (GFIKICSVHTPSSNPKLPPPKPLPGTLKRRRPPQTTQQPSRQRPRENYQMGHMRH) lie on the Cytoplasmic side of the membrane. The segment at 705-749 (PSSNPKLPPPKPLPGTLKRRRPPQTTQQPSRQRPRENYQMGHMRH) is disordered. The SH3-binding signature appears at 709–716 (PKLPPPKP). Position 720 is a phosphothreonine (Thr-720). Residues 723 to 729 (RRRPPQT) carry the SH3-binding motif.

The cofactor is Zn(2+). The precursor is cleaved by furin and PCSK7.

It is found in the membrane. The enzyme catalyses Endopeptidase of broad specificity.. Functionally, controls the proteolytic processing of Notch and mediates lateral inhibition during neurogenesis. The chain is Disintegrin and metalloproteinase domain-containing protein 10 (adam10) from Xenopus laevis (African clawed frog).